Reading from the N-terminus, the 154-residue chain is Aspartate carbamoyltransferase regulatory chain (154 aa).

Zn(2+) is bound by residues Cys109, Cys114, Cys138, and Cys141.

Belongs to the PyrI family. In terms of assembly, contains catalytic and regulatory chains. It depends on Zn(2+) as a cofactor.

Its function is as follows. Involved in allosteric regulation of aspartate carbamoyltransferase. The sequence is that of Aspartate carbamoyltransferase regulatory chain from Yersinia enterocolitica serotype O:8 / biotype 1B (strain NCTC 13174 / 8081).